Reading from the N-terminus, the 221-residue chain is MGYYDDDGNYHSFRRGVERAVDRITHPFHHHHHDHHDHHREEVIVTDERGPVRYRDGVKENVRIVEPRGAAATTSETVPIPTHFIRVGDILVLQGRPCQVIRISSSPMTDQRRYTGVDLFTRELHEESSFVSNPKPSVVVQTMLGPVYKTYRILDIQEGTIVALTESGDVKSGIPVIPQGNLYQRIKDAFLEGRGSVRALVINDGGRELVVDYKIIHSSRL.

Residues 219–221 (SRL) carry the Microbody targeting signal motif.

The protein belongs to the eIF-5A family. Hex1 subfamily. In terms of assembly, forms oligomers. Self-assembles into hexagonal rods.

It is found in the cell septum. In terms of biological role, major component of Woronin bodies, fungal-specific organelles that occlude septal pores in order to separate intact from damaged compartments. Hex1 binds directly or indirectly to the Woronin body tether that in turn is anchored at the rim of the septal pore. The sequence is that of Woronin body major protein from Emericella nidulans (strain FGSC A4 / ATCC 38163 / CBS 112.46 / NRRL 194 / M139) (Aspergillus nidulans).